The primary structure comprises 205 residues: Small ribosomal subunit protein uS2 (205 aa).

This sequence belongs to the universal ribosomal protein uS2 family.

This Aeropyrum pernix (strain ATCC 700893 / DSM 11879 / JCM 9820 / NBRC 100138 / K1) protein is Small ribosomal subunit protein uS2 (rps2).